We begin with the raw amino-acid sequence, 895 residues long: Alanine--tRNA ligase (895 aa).

Zn(2+)-binding residues include His-577, His-581, Cys-680, and His-684.

Belongs to the class-II aminoacyl-tRNA synthetase family. The cofactor is Zn(2+).

It is found in the cytoplasm. It catalyses the reaction tRNA(Ala) + L-alanine + ATP = L-alanyl-tRNA(Ala) + AMP + diphosphate. Catalyzes the attachment of alanine to tRNA(Ala) in a two-step reaction: alanine is first activated by ATP to form Ala-AMP and then transferred to the acceptor end of tRNA(Ala). Also edits incorrectly charged Ser-tRNA(Ala) and Gly-tRNA(Ala) via its editing domain. The chain is Alanine--tRNA ligase from Kocuria rhizophila (strain ATCC 9341 / DSM 348 / NBRC 103217 / DC2201).